The sequence spans 292 residues: MPPKKAAKGKGDPGKAAKKDPTKKAADATFGLKNKNRSTKVQAKIRQIEQNAAASGSKDAKRQEALRKRREEEKRAAEAAKAEVAALFNAIPKKQTPQNFLTRKEEVKESQKIDLYSDVRDQQTDLPLEKRPWINTDIVCKFFLEACETGKYGWLWQCPNGNMTCIYKHALPYGYVLSRDKKKDDTKEEISLEAFIEIERHRLGPNLTPVTEENFKKWSDGRRDRILKQAEERRSNRAVGRSNLSGREYFESNKDKTHEVVGDEEDWDFSALRRETEALAKAQDATAPIVSV.

The interval 1–76 (MPPKKAAKGK…RKRREEEKRA (76 aa)) is disordered. Composition is skewed to basic and acidic residues over residues 9–26 (GKGD…KKAA) and 58–76 (KDAK…EKRA). A C3H1-type zinc finger spans residues 134–172 (INTDIVCKFFLEACETGKYGWLWQCPNGNMTCIYKHALP).

The protein localises to the cytoplasm. Functions as a component of the nuclear pore complex (NPC). NPC components, collectively referred to as nucleoporins (NUPs), can play the role of both NPC structural components and of docking or interaction partners for transiently associated nuclear transport factors. Active directional transport is assured by both, a Phe-Gly (FG) repeat affinity gradient for these transport factors across the NPC and a transport cofactor concentration gradient across the nuclear envelope. Involved in the export of mRNA from the nucleus to the cytoplasm. May play a role in mitotic spindle formation and/or function. The chain is mRNA export protein 33 (mep33) from Schizosaccharomyces pombe (strain 972 / ATCC 24843) (Fission yeast).